The following is a 117-amino-acid chain: Ubiquitin-like protein 3 (117 aa).

A Ubiquitin-like domain is found at 10–88 (INLRLILVSG…PFGKTTVMHL (79 aa)). The S-palmitoyl cysteine moiety is linked to residue cysteine 113. At cysteine 114 the chain carries Cysteine methyl ester. Cysteine 114 is lipidated: S-geranylgeranyl cysteine. Positions 115–117 (VIL) are cleaved as a propeptide — removed in mature form.

Its subcellular location is the cell membrane. The chain is Ubiquitin-like protein 3 (UBL3) from Bos taurus (Bovine).